The sequence spans 369 residues: MNTNYFIGLMSGTSMDGIDAVLVDFSSPSPKLVAKHSQVIPKHTLRNLQRLCLPGSDEINLLGQLDRSVGLLFGAAVNELLAKAGISKEQVVAIGSHGQTVRHMPNLDMGFTLQIGDPNTIAIETGINVIADFRRKDIALGGQGAPLVPAFHQQMFASPDTPRIILNIGGIANLTYLPGTNDDVIGFDTGPGNTLIDAWIQQVKDQAYDEDGAWAASGTTDEKLLKHLLSHTYFSQPFPKSTGRELFNQAWLEQQAAEFGYLNEADIQSTLLDVTCHSIAKDTLALSLRGELFVCGGGAFNTELMSRLDKLLPGYKLSTTSDLGIAPQWVEGIAFAWLAMRHHQGLSGNLPAVTGASREAVLGSLFPAD.

Residue 12–19 (GTSMDGID) coordinates ATP.

Belongs to the anhydro-N-acetylmuramic acid kinase family.

It carries out the reaction 1,6-anhydro-N-acetyl-beta-muramate + ATP + H2O = N-acetyl-D-muramate 6-phosphate + ADP + H(+). It functions in the pathway amino-sugar metabolism; 1,6-anhydro-N-acetylmuramate degradation. Its pathway is cell wall biogenesis; peptidoglycan recycling. Catalyzes the specific phosphorylation of 1,6-anhydro-N-acetylmuramic acid (anhMurNAc) with the simultaneous cleavage of the 1,6-anhydro ring, generating MurNAc-6-P. Is required for the utilization of anhMurNAc either imported from the medium or derived from its own cell wall murein, and thus plays a role in cell wall recycling. This chain is Anhydro-N-acetylmuramic acid kinase, found in Shewanella sediminis (strain HAW-EB3).